Here is a 243-residue protein sequence, read N- to C-terminus: Small ribosomal subunit protein uS3 (243 aa).

A KH type-2 domain is found at 39-110 (IRKFIHKKYG…QVRINVVEVE (72 aa)). Positions 217-243 (QQLPVGATPRRRAGRRPQQFEDRSNEG) are disordered. Over residues 234-243 (QQFEDRSNEG) the composition is skewed to basic and acidic residues.

It belongs to the universal ribosomal protein uS3 family. As to quaternary structure, part of the 30S ribosomal subunit. Forms a tight complex with proteins S10 and S14.

In terms of biological role, binds the lower part of the 30S subunit head. Binds mRNA in the 70S ribosome, positioning it for translation. The chain is Small ribosomal subunit protein uS3 from Synechococcus sp. (strain WH7803).